The primary structure comprises 141 residues: Protein X (141 aa).

Residues 24–48 are compositionally biased toward low complexity; sequence QSSGPPFPRPSAGSAASPASSLSAS. Residues 24 to 51 form a disordered region; that stretch reads QSSGPPFPRPSAGSAASPASSLSASDES. Residues 68–113 are mitochondrial targeting sequence; that stretch reads PCCLVVTCAELRTMDSTVNFVSWHANRQLGMPSKDLWTPYIRDQLL.

The protein belongs to the orthohepadnavirus protein X family. As to quaternary structure, may form homodimer. May interact with host CEBPA, CFLAR, CREB1, DDB1, E4F1, HBXIP, HSPD1/HSP60, NFKBIA, POLR2E and SMAD4. Interacts with host SMC5-SMC6 complex and induces its degradation. Interacts with host TRPC4AP; leading to prevent ubiquitination of TRPC4AP. Interacts with host PLSCR1; this interaction promotes ubiquitination and degradation of HBx and impairs HBx-mediated cell proliferation. A fraction may be phosphorylated in insect cells and HepG2 cells, a human hepatoblastoma cell line. Phosphorylated in vitro by host protein kinase C or mitogen-activated protein kinase. N-acetylated in insect cells.

The protein resides in the host cytoplasm. It localises to the host nucleus. It is found in the host mitochondrion. In terms of biological role, multifunctional protein that plays a role in silencing host antiviral defenses and promoting viral transcription. Does not seem to be essential for HBV infection. May be directly involved in development of cirrhosis and liver cancer (hepatocellular carcinoma). Most of cytosolic activities involve modulation of cytosolic calcium. The effect on apoptosis is controversial depending on the cell types in which the studies have been conducted. May induce apoptosis by localizing in mitochondria and causing loss of mitochondrial membrane potential. May also modulate apoptosis by binding host CFLAR, a key regulator of the death-inducing signaling complex (DISC). Promotes viral transcription by using the host E3 ubiquitin ligase DDB1 to target the SMC5-SMC6 complex to proteasomal degradation. This host complex would otherwise bind to viral episomal DNA, and prevents its transcription. Moderately stimulates transcription of many different viral and cellular transcription elements. Promoters and enhancers stimulated by HBx contain DNA binding sites for NF-kappa-B, AP-1, AP-2, c-EBP, ATF/CREB, or the calcium-activated factor NF-AT. This chain is Protein X, found in Woodchuck hepatitis B virus (isolate 1) (WHV).